The sequence spans 378 residues: Chaperone protein DnaJ (378 aa).

The region spanning 5–70 is the J domain; it reads DYYEVLSVSR…DKKAAYDQFG (66 aa). The CR-type zinc finger occupies 133-211; the sequence is GLTKELRIPT…CHGEGRVEKS (79 aa). Positions 146, 149, 163, 166, 185, 188, 199, and 202 each coordinate Zn(2+). CXXCXGXG motif repeat units follow at residues 146–153, 163–170, 185–192, and 199–206; these read CDSCDGSG, CGTCHGQG, CPTCHGRG, and CNKCHGEG.

This sequence belongs to the DnaJ family. In terms of assembly, homodimer. It depends on Zn(2+) as a cofactor.

It is found in the cytoplasm. Its function is as follows. Participates actively in the response to hyperosmotic and heat shock by preventing the aggregation of stress-denatured proteins and by disaggregating proteins, also in an autonomous, DnaK-independent fashion. Unfolded proteins bind initially to DnaJ; upon interaction with the DnaJ-bound protein, DnaK hydrolyzes its bound ATP, resulting in the formation of a stable complex. GrpE releases ADP from DnaK; ATP binding to DnaK triggers the release of the substrate protein, thus completing the reaction cycle. Several rounds of ATP-dependent interactions between DnaJ, DnaK and GrpE are required for fully efficient folding. Also involved, together with DnaK and GrpE, in the DNA replication of plasmids through activation of initiation proteins. This Shewanella sediminis (strain HAW-EB3) protein is Chaperone protein DnaJ.